Consider the following 639-residue polypeptide: Homeobox protein 9 (639 aa).

6 disordered regions span residues 1–45 (MLNS…DKQN), 66–144 (SPNH…DDNS), 157–179 (NQNQNQNQNQNQNQNQNQNQNQN), 262–313 (PRTL…SSGT), 331–422 (SESS…QTSN), and 436–547 (TNKN…NNEN). Residues 72-109 (ANNNNNNNNNNNNNNNNNNNNNNNNNNNNNNNNNNNIQ) adopt a coiled-coil conformation. 2 stretches are compositionally biased toward low complexity: residues 73–119 (NNNN…SNNN) and 126–142 (GSLNSSNDNNFNSGNDD). Coiled-coil stretches lie at residues 152-184 (SNQNQNQNQNQNQNQNQNQNQNQNQNQNQKDSW) and 230-296 (EIEI…NINE). Low complexity predominate over residues 266-300 (NNSSDSISENINNNNNNNNNNNNNNNNNINESNIN). Basic and acidic residues predominate over residues 345-354 (QPRKVPRDLN). Residues 358-399 (NNNINYANNNNNNNNNNNNNNHNNNINNNNNNNNNNNNNSNN) show a composition bias toward low complexity. A coiled-coil region spans residues 365–396 (NNNNNNNNNNNNNNHNNNINNNNNNNNNNNNN). Residues 405–422 (GSITNSVNIKPSKDQTSN) show a composition bias toward polar residues. The span at 436 to 526 (TNKNNNNNNN…NNNLTSSSNN (91 aa)) shows a compositional bias: low complexity. The segment covering 532–547 (GNTSPNQSSANGNNEN) has biased composition (polar residues). The segment at residues 559–621 (KRKKRGKLPG…NARRRILPRQ (63 aa)) is a DNA-binding region (homeobox).

It localises to the nucleus. In terms of biological role, putative transcription factor. This Dictyostelium discoideum (Social amoeba) protein is Homeobox protein 9 (hbx9).